The sequence spans 173 residues: Small ribosomal subunit protein uS5 (173 aa).

One can recognise an S5 DRBM domain in the interval 17-80; sequence WQERVIQIRR…ADGKKQLIEV (64 aa).

The protein belongs to the universal ribosomal protein uS5 family. Part of the 30S ribosomal subunit. Contacts proteins S4 and S8.

In terms of biological role, with S4 and S12 plays an important role in translational accuracy. Its function is as follows. Located at the back of the 30S subunit body where it stabilizes the conformation of the head with respect to the body. This Gloeothece citriformis (strain PCC 7424) (Cyanothece sp. (strain PCC 7424)) protein is Small ribosomal subunit protein uS5.